A 147-amino-acid polypeptide reads, in one-letter code: Hemoglobin subunit beta (147 aa).

Val-2 is modified (N-acetylvaline). Residues 3–147 (HMSAEEKGIV…VAAALAHKYH (145 aa)) form the Globin domain. Thr-13 bears the Phosphothreonine mark. Ser-45 is modified (phosphoserine). Lys-60 is subject to N6-acetyllysine. A heme b-binding site is contributed by His-64. Residue Lys-83 is modified to N6-acetyllysine. Heme b is bound at residue His-93. At Cys-94 the chain carries S-nitrosocysteine. The residue at position 145 (Lys-145) is an N6-acetyllysine.

Belongs to the globin family. In terms of assembly, heterotetramer of two alpha chains and two beta chains. Red blood cells.

Functionally, involved in oxygen transport from the lung to the various peripheral tissues. This Scalopus aquaticus (Eastern mole) protein is Hemoglobin subunit beta (HBB).